A 618-amino-acid chain; its full sequence is Carbamoyl phosphate synthase large chain, C-terminal section (618 aa).

The oligomerization domain stretch occupies residues M1–E78. The interval S79–E477 is carbamoyl phosphate synthetic domain. Residues S208–L399 form the ATP-grasp domain. Residues R244, K283, L285, E290, G315, V316, H317, S318, Q358, and E370 each coordinate ATP. The Mg(2+) site is built by Q358, E370, and N372. Mn(2+)-binding residues include Q358, E370, and N372. The MGS-like domain maps to M476 to F618. The interval L478–F618 is allosteric domain.

This sequence belongs to the CarB family. In terms of assembly, composed of two chains; the small (or glutamine) chain promotes the hydrolysis of glutamine to ammonia, which is used by the large (or ammonia) chain to synthesize carbamoyl phosphate. Tetramer of heterodimers (alpha,beta)4. Mg(2+) serves as cofactor. The cofactor is Mn(2+).

It carries out the reaction hydrogencarbonate + L-glutamine + 2 ATP + H2O = carbamoyl phosphate + L-glutamate + 2 ADP + phosphate + 2 H(+). The catalysed reaction is hydrogencarbonate + NH4(+) + 2 ATP = carbamoyl phosphate + 2 ADP + phosphate + 2 H(+). The protein operates within amino-acid biosynthesis; L-arginine biosynthesis; carbamoyl phosphate from bicarbonate: step 1/1. It functions in the pathway pyrimidine metabolism; UMP biosynthesis via de novo pathway; (S)-dihydroorotate from bicarbonate: step 1/3. Its function is as follows. Large subunit of the glutamine-dependent carbamoyl phosphate synthetase (CPSase). CPSase catalyzes the formation of carbamoyl phosphate from the ammonia moiety of glutamine, carbonate, and phosphate donated by ATP, constituting the first step of 2 biosynthetic pathways, one leading to arginine and/or urea and the other to pyrimidine nucleotides. The large subunit (synthetase) binds the substrates ammonia (free or transferred from glutamine from the small subunit), hydrogencarbonate and ATP and carries out an ATP-coupled ligase reaction, activating hydrogencarbonate by forming carboxy phosphate which reacts with ammonia to form carbamoyl phosphate. In Methanocaldococcus jannaschii (strain ATCC 43067 / DSM 2661 / JAL-1 / JCM 10045 / NBRC 100440) (Methanococcus jannaschii), this protein is Carbamoyl phosphate synthase large chain, C-terminal section (carB2).